Here is a 523-residue protein sequence, read N- to C-terminus: Alpha,alpha-trehalose-phosphate synthase [UDP-forming] (523 aa).

The D-glucose 6-phosphate site is built by Tyr98 and Asp152. UDP is bound by residues Arg288 and Lys293. UDP-alpha-D-glucose contacts are provided by Arg288 and Lys293. Arg326 contacts D-glucose 6-phosphate. Position 387 to 395 (387 to 395) interacts with UDP-alpha-D-glucose; sequence DGMNLVSYE. 391 to 395 lines the UDP pocket; sequence LVSYE. Residues 503–523 are disordered; it reads QQFNLGEQREEGRLEPGEFDD. Positions 509 to 523 are enriched in basic and acidic residues; the sequence is EQREEGRLEPGEFDD.

The protein belongs to the glycosyltransferase 20 family.

It catalyses the reaction D-glucose 6-phosphate + UDP-alpha-D-glucose = alpha,alpha-trehalose 6-phosphate + UDP + H(+). Its pathway is carbohydrate biosynthesis. Functionally, synthase catalytic subunit of the trehalose synthase complex that catalyzes the production of trehalose from glucose-6-phosphate and UDP-alpha-D-glucose in a two step process. The disaccharide trehalose serves as a storage carbohydrate that is mobilized during conidial germination. Trehalose also serves as a protectant for cell integrity during stress. The chain is Alpha,alpha-trehalose-phosphate synthase [UDP-forming] from Botryotinia fuckeliana (strain B05.10) (Noble rot fungus).